Consider the following 456-residue polypeptide: MSSDTNLSNPPKVGFVSLGCPKALVDSEQIITQLRAEGYSISGTYDGADLVVVNTCGFIDEAVQESLDAIGEALTENGKVIVTGCLGAKKDAAGHDIVSAVHPKVLAVTGPHALGEVMQAVHTHLPKPHDPFTDLVPAAGIKLTPKHYAYLKISEGCNHRCSFCIIPSMRGDLVSRPVAEVMLEAENLFKAGVKELLVISQDTSAYGVDVKYRTGFWNGRPLKTRMTELVAALGELASQYGAWVRLHYVYPYPHVDEIIPLMNQGNVLPYLDVPLQHAHPDVLKRMKRPANAEKTLDRIRAWREVCPDLTIRSTFIAGFPGETEEEFQTLLDFIAEAELDRVGCFAYSPVEGATANDLPGALPDEVREERRARFMEVAEEVSARRLQRKVGQTLRVLVDEVNQDGGIGRSSADAPEIDGLVYIDPAAKASQRYKTGDFVNVKITGADGHDLWGEVA.

One can recognise an MTTase N-terminal domain in the interval 11–126 (PKVGFVSLGC…VMQAVHTHLP (116 aa)). The [4Fe-4S] cluster site is built by Cys20, Cys56, Cys85, Cys157, Cys161, and Cys164. One can recognise a Radical SAM core domain in the interval 143 to 384 (LTPKHYAYLK…MEVAEEVSAR (242 aa)). The TRAM domain maps to 387 to 456 (QRKVGQTLRV…DGHDLWGEVA (70 aa)).

Belongs to the methylthiotransferase family. RimO subfamily. [4Fe-4S] cluster is required as a cofactor.

The protein localises to the cytoplasm. The enzyme catalyses L-aspartate(89)-[ribosomal protein uS12]-hydrogen + (sulfur carrier)-SH + AH2 + 2 S-adenosyl-L-methionine = 3-methylsulfanyl-L-aspartate(89)-[ribosomal protein uS12]-hydrogen + (sulfur carrier)-H + 5'-deoxyadenosine + L-methionine + A + S-adenosyl-L-homocysteine + 2 H(+). Functionally, catalyzes the methylthiolation of an aspartic acid residue of ribosomal protein uS12. This Cupriavidus metallidurans (strain ATCC 43123 / DSM 2839 / NBRC 102507 / CH34) (Ralstonia metallidurans) protein is Ribosomal protein uS12 methylthiotransferase RimO.